The following is a 399-amino-acid chain: Methylthioribose kinase (399 aa).

ATP contacts are provided by residues Asn-40, Lys-57, and 111 to 113; that span reads EDL. Asp-229 lines the substrate pocket. ATP is bound at residue 246–248; sequence DAE. Residue Arg-344 participates in substrate binding.

Belongs to the methylthioribose kinase family. As to quaternary structure, homodimer.

The catalysed reaction is 5-(methylsulfanyl)-D-ribose + ATP = 5-(methylsulfanyl)-alpha-D-ribose 1-phosphate + ADP + H(+). It functions in the pathway amino-acid biosynthesis; L-methionine biosynthesis via salvage pathway; S-methyl-5-thio-alpha-D-ribose 1-phosphate from S-methyl-5'-thioadenosine (hydrolase route): step 2/2. Functionally, catalyzes the phosphorylation of methylthioribose into methylthioribose-1-phosphate. The protein is Methylthioribose kinase of Klebsiella pneumoniae (strain 342).